The chain runs to 850 residues: Adenylate cyclase (850 aa).

A catalytic region spans residues 1–535; the sequence is MYLYIETLKQ…DISHHFPLRL (535 aa). Residues 541–850 form a regulatory region; that stretch reads KALYSPCEIR…SLPTKQCQLH (310 aa).

It belongs to the adenylyl cyclase class-1 family.

Its subcellular location is the cytoplasm. The catalysed reaction is ATP = 3',5'-cyclic AMP + diphosphate. With respect to regulation, the regulatory domain is involved in the regulation of cyclase activity by the carbon source. The sequence is that of Adenylate cyclase (cya) from Yersinia pestis.